The chain runs to 506 residues: Cysteine--tRNA ligase (506 aa).

Cys-43 contacts Zn(2+). Positions 45-55 (VTVYDLCHLGH) match the 'HIGH' region motif. Residues Cys-237, His-262, and Glu-266 each coordinate Zn(2+). The 'KMSKS' region signature appears at 294 to 298 (KMSKS). An ATP-binding site is contributed by Lys-297.

It belongs to the class-I aminoacyl-tRNA synthetase family. In terms of assembly, monomer. The cofactor is Zn(2+).

The protein localises to the cytoplasm. It catalyses the reaction tRNA(Cys) + L-cysteine + ATP = L-cysteinyl-tRNA(Cys) + AMP + diphosphate. In Synechococcus sp. (strain JA-3-3Ab) (Cyanobacteria bacterium Yellowstone A-Prime), this protein is Cysteine--tRNA ligase.